A 161-amino-acid polypeptide reads, in one-letter code: Peptidyl-prolyl cis-trans isomerase-like 3 (161 aa).

Serine 2 is modified (N-acetylserine). The 153-residue stretch at 2–154 (SVTLHTDVGD…NDVHIKDITI (153 aa)) folds into the PPIase cyclophilin-type domain. Position 61 is an omega-N-methylarginine (arginine 61).

It belongs to the cyclophilin-type PPIase family. PPIL3 subfamily. Identified in the spliceosome C complex. As to expression, ubiquitous. Detected at low levels.

The enzyme catalyses [protein]-peptidylproline (omega=180) = [protein]-peptidylproline (omega=0). In terms of biological role, PPIases accelerate the folding of proteins. It catalyzes the cis-trans isomerization of proline imidic peptide bonds in oligopeptides. May be involved in pre-mRNA splicing. The polypeptide is Peptidyl-prolyl cis-trans isomerase-like 3 (PPIL3) (Homo sapiens (Human)).